The sequence spans 446 residues: Actin-related protein 6 (446 aa).

Residues 1–11 (MTGRGGAKKSR) show a composition bias toward basic residues. The interval 1-24 (MTGRGGAKKSRAAGPAPPTTTLVL) is disordered.

The protein belongs to the actin family. ARP6 subfamily. As to quaternary structure, component of the SWR1 chromatin remodeling complex.

The protein localises to the cytoplasm. It localises to the cytoskeleton. Its subcellular location is the nucleus. In terms of biological role, component of the SWR1 complex which mediates the ATP-dependent exchange of histone H2A for the H2A variant H2A.Z leading to transcriptional regulation of selected genes by chromatin remodeling. Involved in chromosome stability. The sequence is that of Actin-related protein 6 (arp-6) from Neurospora crassa (strain ATCC 24698 / 74-OR23-1A / CBS 708.71 / DSM 1257 / FGSC 987).